A 275-amino-acid polypeptide reads, in one-letter code: MDKPASRHFSVLIIDDEPQVTSELRELLENSGYRCVTSTHRESAIASFQADPNIGLVICDLYLGQDNGIRLIESLKEVAGNGRFFESIILTGHDGRQEVIEAMRVGAADYYQKPVAPQELLHGLERLESRLHERVRSQLSLSHVNQRLEYLAESLNSIYRDIHKIKYEVHGNSQPSALRSEDSQPSAPPAPVAESQVSPSNPLFGKLSPRQQAVARLVSKGLTNYQIAYELGITENTVKLYVSQVLRLMHMHNRTQLALALSPAAMQQGSGAVVH.

A Response regulatory domain is found at 10 to 128 (SVLIIDDEPQ…ELLHGLERLE (119 aa)). Asp-60 carries the 4-aspartylphosphate modification. Residues 173 to 205 (SQPSALRSEDSQPSAPPAPVAESQVSPSNPLFG) form a disordered region. One can recognise an HTH luxR-type domain in the interval 200 to 265 (SNPLFGKLSP…QLALALSPAA (66 aa)). The H-T-H motif DNA-binding region spans 224–243 (NYQIAYELGITENTVKLYVS).

Post-translationally, phosphorylated by PprA.

Its function is as follows. Member of the two-component regulatory system PprA/PprB involved in biofilm formation by controlling the expression of many related genes including type IVb pili major subunit flp pilin, adhesin bapA or cupE fimbriae. Functions as a transcription regulator by direct binding to promoter regions. Negatively regulates its own transcription. This Pseudomonas aeruginosa (strain ATCC 15692 / DSM 22644 / CIP 104116 / JCM 14847 / LMG 12228 / 1C / PRS 101 / PAO1) protein is Two-component response regulator PprB.